A 391-amino-acid chain; its full sequence is tRNA-specific 2-thiouridylase MnmA (391 aa).

Residues 9-16 (GMSGGVDS) and M35 contribute to the ATP site. An interaction with target base in tRNA region spans residues 95–97 (NPD). Residue C100 is the Nucleophile of the active site. Residues C100 and C196 are joined by a disulfide bond. G124 serves as a coordination point for ATP. The tract at residues 146 to 148 (KDQ) is interaction with tRNA. Catalysis depends on C196, which acts as the Cysteine persulfide intermediate. The segment at 308–309 (RY) is interaction with tRNA. Residues 372-382 (TGQPGQATSTG) are compositionally biased toward polar residues. The disordered stretch occupies residues 372-391 (TGQPGQATSTGHAPALAEAR).

Belongs to the MnmA/TRMU family.

The protein resides in the cytoplasm. It catalyses the reaction S-sulfanyl-L-cysteinyl-[protein] + uridine(34) in tRNA + AH2 + ATP = 2-thiouridine(34) in tRNA + L-cysteinyl-[protein] + A + AMP + diphosphate + H(+). Functionally, catalyzes the 2-thiolation of uridine at the wobble position (U34) of tRNA, leading to the formation of s(2)U34. The chain is tRNA-specific 2-thiouridylase MnmA from Burkholderia cenocepacia (strain ATCC BAA-245 / DSM 16553 / LMG 16656 / NCTC 13227 / J2315 / CF5610) (Burkholderia cepacia (strain J2315)).